A 201-amino-acid polypeptide reads, in one-letter code: Protocatechuate 3,4-dioxygenase alpha chain (201 aa).

3,4-dihydroxybenzoate is bound at residue Arg134.

This sequence belongs to the intradiol ring-cleavage dioxygenase family. In terms of assembly, the enzyme is an oligomer of 12 copies of the alpha and beta chains. It depends on Fe(3+) as a cofactor.

It carries out the reaction 3,4-dihydroxybenzoate + O2 = 3-carboxy-cis,cis-muconate + 2 H(+). The protein operates within aromatic compound metabolism; beta-ketoadipate pathway; 3-carboxy-cis,cis-muconate from 3,4-dihydroxybenzoate: step 1/1. In terms of biological role, plays an essential role in the utilization of numerous aromatic and hydroaromatic compounds via the beta-ketoadipate pathway. This Pseudomonas putida (Arthrobacter siderocapsulatus) protein is Protocatechuate 3,4-dioxygenase alpha chain (pcaG).